The following is an 89-amino-acid chain: Long neurotoxin homolog NTL2 (89 aa).

Positions M1–T21 are cleaved as a signal peptide. 5 cysteine pairs are disulfide-bonded: C24–C45, C27–C32, C38–C66, C70–C81, and C82–C87. Residues R54–D56 carry the Cell attachment site motif.

It belongs to the three-finger toxin family. Ancestral subfamily. Orphan group V sub-subfamily. As to expression, expressed by the venom gland.

It is found in the secreted. Exhibits M2 muscarinic acetylcholine receptor (CHRM2)-blocking activity, but has a weak binding activity toward nicotinic AChR. Moreover, it inhibits collagen-induced platelet aggregation. The sequence is that of Long neurotoxin homolog NTL2 from Bungarus multicinctus (Many-banded krait).